Consider the following 268-residue polypeptide: Imidazole glycerol phosphate synthase subunit HisF (268 aa).

Residues D12 and D131 contribute to the active site.

The protein belongs to the HisA/HisF family. In terms of assembly, heterodimer of HisH and HisF.

The protein resides in the cytoplasm. The catalysed reaction is 5-[(5-phospho-1-deoxy-D-ribulos-1-ylimino)methylamino]-1-(5-phospho-beta-D-ribosyl)imidazole-4-carboxamide + L-glutamine = D-erythro-1-(imidazol-4-yl)glycerol 3-phosphate + 5-amino-1-(5-phospho-beta-D-ribosyl)imidazole-4-carboxamide + L-glutamate + H(+). The protein operates within amino-acid biosynthesis; L-histidine biosynthesis; L-histidine from 5-phospho-alpha-D-ribose 1-diphosphate: step 5/9. Its function is as follows. IGPS catalyzes the conversion of PRFAR and glutamine to IGP, AICAR and glutamate. The HisF subunit catalyzes the cyclization activity that produces IGP and AICAR from PRFAR using the ammonia provided by the HisH subunit. The chain is Imidazole glycerol phosphate synthase subunit HisF from Chelativorans sp. (strain BNC1).